A 1015-amino-acid polypeptide reads, in one-letter code: Beta-galactosidase (1015 aa).

Residue Glu-434 is the Proton donor of the active site. Glu-513 acts as the Nucleophile in catalysis.

This sequence belongs to the glycosyl hydrolase 2 family. Mg(2+) is required as a cofactor. Requires Mn(2+) as cofactor.

The enzyme catalyses Hydrolysis of terminal non-reducing beta-D-galactose residues in beta-D-galactosides.. The protein is Beta-galactosidase (lacZ) of Arthrobacter sp. (strain B7).